Consider the following 506-residue polypeptide: Tyrosine-protein kinase isoform SRK4 (506 aa).

2 stretches are compositionally biased toward polar residues: residues 1-10 (MGSCCSSQDG) and 18-31 (AGST…SQSV). The tract at residues 1–53 (MGSCCSSQDGDGNGKATAGSTVDSHELSQSVKGKIKQPEPKPKPPPQVPPAQD) is disordered. The 63-residue stretch at 54–116 (VKYPIYVGKY…PSNYVAEYKS (63 aa)) folds into the SH3 domain. Positions 122 to 214 (WFFGQVKRVD…GLCVNLKGPC (93 aa)) constitute an SH2 domain. In terms of domain architecture, Protein kinase spans 240–493 (IKLLRGLGAG…TLSWQLEEFF (254 aa)). ATP contacts are provided by residues 246–254 (LGAGQFGEV) and lysine 268. Aspartate 359 (proton acceptor) is an active-site residue.

This sequence belongs to the protein kinase superfamily. Tyr protein kinase family.

The protein localises to the cytoplasm. It carries out the reaction L-tyrosyl-[protein] + ATP = O-phospho-L-tyrosyl-[protein] + ADP + H(+). In Spongilla lacustris (Freshwater sponge), this protein is Tyrosine-protein kinase isoform SRK4 (SRK1).